A 270-amino-acid chain; its full sequence is NAD kinase (270 aa).

The Proton acceptor role is filled by aspartate 61. NAD(+) contacts are provided by residues 61–62 (DG), 133–134 (NE), arginine 144, arginine 163, aspartate 165, and 176–181 (TAYNLS).

This sequence belongs to the NAD kinase family. The cofactor is a divalent metal cation.

The protein localises to the cytoplasm. It catalyses the reaction NAD(+) + ATP = ADP + NADP(+) + H(+). Involved in the regulation of the intracellular balance of NAD and NADP, and is a key enzyme in the biosynthesis of NADP. Catalyzes specifically the phosphorylation on 2'-hydroxyl of the adenosine moiety of NAD to yield NADP. The sequence is that of NAD kinase from Natronomonas pharaonis (strain ATCC 35678 / DSM 2160 / CIP 103997 / JCM 8858 / NBRC 14720 / NCIMB 2260 / Gabara) (Halobacterium pharaonis).